A 107-amino-acid chain; its full sequence is uncharacterized protein (107 aa).

Residues 52 to 72 form a helical membrane-spanning segment; it reads LIIHDLFIYIFILNFFFFPFC.

The protein localises to the membrane. This is an uncharacterized protein from Saccharomyces cerevisiae (strain ATCC 204508 / S288c) (Baker's yeast).